We begin with the raw amino-acid sequence, 407 residues long: Peptidase T (407 aa).

His82 provides a ligand contact to Zn(2+). Asp84 is an active-site residue. Asp143 lines the Zn(2+) pocket. Residue Glu177 is the Proton acceptor of the active site. Zn(2+) is bound by residues Glu178, Asp200, and His382.

The protein belongs to the peptidase M20B family. The cofactor is Zn(2+).

It localises to the cytoplasm. It catalyses the reaction Release of the N-terminal residue from a tripeptide.. Functionally, cleaves the N-terminal amino acid of tripeptides. The chain is Peptidase T from Streptococcus pyogenes serotype M3 (strain ATCC BAA-595 / MGAS315).